A 602-amino-acid chain; its full sequence is Wings apart-like protein homolog 1 (602 aa).

A disordered region spans residues 34–66; it reads NKQKRSPGQTVSKRLHKKQRVVSNPDLSLPSSP. Residues 54 to 66 are compositionally biased toward polar residues; the sequence is VVSNPDLSLPSSP. One can recognise a WAPL domain in the interval 160 to 492; it reads IQMKSIHELR…LGLVEESHEF (333 aa).

Belongs to the WAPL family.

It is found in the nucleus. The protein localises to the chromosome. Regulator of sister chromatid cohesion in mitosis which negatively regulates cohesin association with chromatin. The polypeptide is Wings apart-like protein homolog 1 (wpl1) (Schizosaccharomyces pombe (strain 972 / ATCC 24843) (Fission yeast)).